Here is a 740-residue protein sequence, read N- to C-terminus: Ethylene receptor 1 (740 aa).

The next 3 membrane-spanning stretches (helical) occupy residues Ile23 to Val43, Trp53 to Leu73, and Val92 to Leu112. Cu cation is bound by residues Cys65 and His69. Residues Asp158 to Leu307 enclose the GAF domain. In terms of domain architecture, Histidine kinase spans Val350–Glu588. A Phosphohistidine; by autocatalysis modification is found at His353. Positions Lys614 to Ile731 constitute a Response regulatory domain. At Asp662 the chain carries 4-aspartylphosphate.

Belongs to the ethylene receptor family. Homodimer; disulfide-linked. Requires Cu cation as cofactor. In terms of processing, activation probably requires a transfer of a phosphate group between a His in the transmitter domain and an Asp of the receiver domain.

The protein localises to the endoplasmic reticulum membrane. The catalysed reaction is ATP + protein L-histidine = ADP + protein N-phospho-L-histidine.. Its function is as follows. May act early in the ethylene signal transduction pathway, possibly as an ethylene receptor, or as a regulator of the pathway. This is Ethylene receptor 1 (ETR1) from Cucumis sativus (Cucumber).